Here is a 303-residue protein sequence, read N- to C-terminus: Olfactory receptor 4X2 (303 aa).

The Extracellular portion of the chain corresponds to 1–17 (MTEFIFLVLSPNQEVQR). Residues 18-41 (VCFVIFLFLYTAIVLGNFLIVLTV) traverse the membrane as a helical segment. Topologically, residues 42–49 (MTSRSLGS) are cytoplasmic. The helical transmembrane segment at 50 to 71 (PMYFFLSYLSFMEICYSSATAP) threads the bilayer. Over 72-92 (KLISDLLAERKVISWWGCMAQ) the chain is Extracellular. C89 and C181 are oxidised to a cystine. Residues 93-112 (LFFLHFFGGTEIFLLTVMAY) traverse the membrane as a helical segment. The Cytoplasmic portion of the chain corresponds to 113–131 (DHYVAICKPLSYTTIMNWQ). Residues 132-150 (VCTVLVGIAWVGGFMHSFA) form a helical membrane-spanning segment. Topologically, residues 151–187 (QILLIFHLLFCGPNVINHYFCDLVPLLKLACSDTFLI) are extracellular. Residues 188 to 211 (GLLIVANGGTLSVISFGVLLASYM) form a helical membrane-spanning segment. Topologically, residues 212–227 (VILLHLRTWSSEGWCK) are cytoplasmic. The helical transmembrane segment at 228-250 (ALSTCGSHFAVVILFFGPCVFNS) threads the bilayer. The Extracellular segment spans residues 251–261 (LRPSTTLPIDK). The helical transmembrane segment at 262–281 (MVAVFYTVITAILNPVIYSL) threads the bilayer. The Cytoplasmic segment spans residues 282–303 (RNAEMRKAMKRLWIRTLRLNEK).

The protein belongs to the G-protein coupled receptor 1 family.

Its subcellular location is the cell membrane. Odorant receptor. In Homo sapiens (Human), this protein is Olfactory receptor 4X2 (OR4X2).